The primary structure comprises 388 residues: Probable proton-coupled zinc antiporter SLC30A3 (388 aa).

The segment at 1–42 (MEPSPASGGSETTRLVSPRDRSSAGGGLRLKSLFTEPSEPLP) is disordered. Residues 1 to 75 (MEPSPASGGS…SPERAQARRQ (75 aa)) lie on the Cytoplasmic side of the membrane. 2 positions are modified to phosphoserine: Ser63 and Ser66. The chain crosses the membrane as a helical span at residues 76–96 (LYAACVVCFIFMAGEVVGGYL). Residues 97–105 (AHSLAIMTD) lie on the Lumenal side of the membrane. Residues 106 to 126 (AAHLLADIGSMMASLFSLWLS) form a helical membrane-spanning segment. Zn(2+) contacts are provided by His108 and Asp112. At 127–145 (TRPATRTMTFGWHRSETLG) the chain is on the cytoplasmic side. Residues 146 to 166 (ALASVVSLWIVTGILLYLAFL) form a helical membrane-spanning segment. At 167-177 (RLLHSDYHIEA) the chain is on the lumenal side. A helical membrane pass occupies residues 178 to 198 (GAMLLTASIAVCANMIMAFVL). Topologically, residues 199–235 (HQTGAPHSHGPRGAEYAPLEEGHGHPLSLGNTSVRAA) are cytoplasmic. Residues 236–256 (FVHVLGDLLQSLGVLAASILI) form a helical membrane-spanning segment. Residues His238 and Asp242 each coordinate Zn(2+). Residues 257–263 (YFKPQYK) lie on the Lumenal side of the membrane. A helical transmembrane segment spans residues 264 to 284 (VADPISTFLFSICALGSTAPT). The Cytoplasmic segment spans residues 285–388 (LRDVLLVLME…CLRCREPPKA (104 aa)).

The protein belongs to the cation diffusion facilitator (CDF) transporter (TC 2.A.4) family. SLC30A subfamily. As to quaternary structure, homodimer. Homodimerization could regulate efficiency of zinc transport. Interacts with TMEM163.

The protein resides in the cytoplasmic vesicle. It localises to the secretory vesicle. Its subcellular location is the synaptic vesicle membrane. The protein localises to the synapse. It is found in the synaptosome. The protein resides in the late endosome membrane. It localises to the lysosome membrane. It catalyses the reaction Zn(2+)(in) + 2 H(+)(out) = Zn(2+)(out) + 2 H(+)(in). Probable proton-coupled zinc ion antiporter mediating the import of zinc from cytoplasm into synaptic vesicles and participating to cellular zinc ion homeostasis in the brain. The protein is Probable proton-coupled zinc antiporter SLC30A3 of Rattus norvegicus (Rat).